The primary structure comprises 190 residues: Threonylcarbamoyl-AMP synthase (190 aa).

In terms of domain architecture, YrdC-like spans 7–190 (SEAVAHAVAV…ALTGELFRQG (184 aa)).

The protein belongs to the SUA5 family. TsaC subfamily.

It localises to the cytoplasm. The catalysed reaction is L-threonine + hydrogencarbonate + ATP = L-threonylcarbamoyladenylate + diphosphate + H2O. Required for the formation of a threonylcarbamoyl group on adenosine at position 37 (t(6)A37) in tRNAs that read codons beginning with adenine. Catalyzes the conversion of L-threonine, HCO(3)(-)/CO(2) and ATP to give threonylcarbamoyl-AMP (TC-AMP) as the acyladenylate intermediate, with the release of diphosphate. The chain is Threonylcarbamoyl-AMP synthase from Klebsiella pneumoniae subsp. pneumoniae (strain ATCC 700721 / MGH 78578).